The sequence spans 364 residues: Aminomethyltransferase (364 aa).

This sequence belongs to the GcvT family. The glycine cleavage system is composed of four proteins: P, T, L and H.

It catalyses the reaction N(6)-[(R)-S(8)-aminomethyldihydrolipoyl]-L-lysyl-[protein] + (6S)-5,6,7,8-tetrahydrofolate = N(6)-[(R)-dihydrolipoyl]-L-lysyl-[protein] + (6R)-5,10-methylene-5,6,7,8-tetrahydrofolate + NH4(+). The glycine cleavage system catalyzes the degradation of glycine. This is Aminomethyltransferase from Salmonella paratyphi B (strain ATCC BAA-1250 / SPB7).